The chain runs to 984 residues: Detocs histidine-protein kinase DtcA (984 aa).

At His645 the chain carries Phosphohistidine; by autocatalysis.

Post-translationally, autophosphorylated.

The catalysed reaction is ATP + protein L-histidine = ADP + protein N-phospho-L-histidine.. Sensor-kinase member of the two-component regulatory system Detocs that confers resistance to bacteriophage. When the system (DtcA-DtcB-DtcC) is expressed in a susceptible E.coli (strain MG1655) it confers resistance to bacteriophages T2, T4, T5, T6 and SECphi27. Detocs inhibits T5 infection leading to growth arrest but not complete cell lysis, during SECphi27 infection leads to cell lysis. DtcA (this subunit) probably autophosphorylates upon sensing viral infection, and subsequently transfers the phosphate signal to DtcC which activates it, leading to an antiviral defense; DtcB may scavenge phosphorylation signals from accidental activation of DtcA. This chain is Detocs histidine-protein kinase DtcA, found in Vibrio alginolyticus.